Reading from the N-terminus, the 68-residue chain is Protein SlyX homolog (68 aa).

Belongs to the SlyX family.

The sequence is that of Protein SlyX homolog from Pseudomonas fluorescens (strain ATCC BAA-477 / NRRL B-23932 / Pf-5).